Reading from the N-terminus, the 172-residue chain is Co-chaperone protein HscB homolog (172 aa).

Residues 2-74 (NHFELFGLVE…LRRAEYLLSL (73 aa)) enclose the J domain.

It belongs to the HscB family. Interacts with HscA and stimulates its ATPase activity.

Functionally, co-chaperone involved in the maturation of iron-sulfur cluster-containing proteins. Seems to help targeting proteins to be folded toward HscA. In Aeromonas salmonicida (strain A449), this protein is Co-chaperone protein HscB homolog.